We begin with the raw amino-acid sequence, 60 residues long: Large ribosomal subunit protein bL32 (60 aa).

Belongs to the bacterial ribosomal protein bL32 family.

In Ehrlichia ruminantium (strain Gardel), this protein is Large ribosomal subunit protein bL32.